The sequence spans 207 residues: uncharacterized protein (207 aa).

Disordered regions lie at residues M1–R81 and T140–K169. The span at F21 to E40 shows a compositional bias: polar residues. Basic residues predominate over residues P58–S70. Polar residues predominate over residues T140 to Q152. Over residues A156 to G165 the composition is skewed to basic and acidic residues.

Its subcellular location is the nucleus. The protein localises to the nucleolus. This is an uncharacterized protein from Schizosaccharomyces pombe (strain 972 / ATCC 24843) (Fission yeast).